We begin with the raw amino-acid sequence, 518 residues long: Retinal dehydrogenase 2 (518 aa).

The residue at position 168 (tyrosine 168) is a Phosphotyrosine. Residues isoleucine 184 to tryptophan 186, lysine 210 to glutamate 213, and serine 264 to glutamate 266 contribute to the NAD(+) site. Glutamate 286 functions as the Proton acceptor in the catalytic mechanism. The active-site Nucleophile is cysteine 320. Position 351 is a phosphoserine (serine 351). NAD(+) is bound by residues lysine 366–lysine 370 and glutamate 417.

The protein belongs to the aldehyde dehydrogenase family. In terms of assembly, homotetramer. As to expression, found in testis and less abundantly in lung, brain, heart, liver and kidney.

Its subcellular location is the cytoplasm. It catalyses the reaction retinal + NAD(+) + H2O = retinoate + NADH + 2 H(+). The enzyme catalyses all-trans-retinal + NAD(+) + H2O = all-trans-retinoate + NADH + 2 H(+). It carries out the reaction all-trans-13,14-dihydroretinal + NAD(+) + H2O = all-trans-13,14-dihydroretinoate + NADH + 2 H(+). It participates in cofactor metabolism; retinol metabolism. In terms of biological role, catalyzes the NAD-dependent oxidation of aldehyde substrates, such as all-trans-retinal and all-trans-13,14-dihydroretinal, to their corresponding carboxylic acids, all-trans-retinoate and all-trans-13,14-dihydroretinoate, respectively. Retinoate signaling is critical for the transcriptional control of many genes, for instance it is crucial for initiation of meiosis in both male and female. Recognizes retinal as substrate, both in its free form and when bound to cellular retinol-binding protein. Lacks activity with benzaldehyde, acetaldehyde and octanal. Displays complete lack of activity with citral. The polypeptide is Retinal dehydrogenase 2 (Aldh1a2) (Rattus norvegicus (Rat)).